The primary structure comprises 48 residues: uncharacterized protein (48 aa).

This is an uncharacterized protein from Acidianus convivator (ABV).